A 386-amino-acid chain; its full sequence is Succinate--CoA ligase [ADP-forming] subunit beta (386 aa).

One can recognise an ATP-grasp domain in the interval 9–244 (KEILRNFGVP…LDEEDPAEVE (236 aa)). Residues K46, 53–55 (GRG), E99, A102, and E107 contribute to the ATP site. 2 residues coordinate Mg(2+): N199 and D213. Residues N264 and 321-323 (GIM) contribute to the substrate site.

It belongs to the succinate/malate CoA ligase beta subunit family. Heterotetramer of two alpha and two beta subunits. It depends on Mg(2+) as a cofactor.

It catalyses the reaction succinate + ATP + CoA = succinyl-CoA + ADP + phosphate. The enzyme catalyses GTP + succinate + CoA = succinyl-CoA + GDP + phosphate. It functions in the pathway carbohydrate metabolism; tricarboxylic acid cycle; succinate from succinyl-CoA (ligase route): step 1/1. Functionally, succinyl-CoA synthetase functions in the citric acid cycle (TCA), coupling the hydrolysis of succinyl-CoA to the synthesis of either ATP or GTP and thus represents the only step of substrate-level phosphorylation in the TCA. The beta subunit provides nucleotide specificity of the enzyme and binds the substrate succinate, while the binding sites for coenzyme A and phosphate are found in the alpha subunit. The polypeptide is Succinate--CoA ligase [ADP-forming] subunit beta (Polaromonas naphthalenivorans (strain CJ2)).